The sequence spans 746 residues: Centromere protein I (746 aa).

A disordered region spans residues 1-24 (MATQRVTRNSQQQNRISQGSNSRQ).

This sequence belongs to the CENP-I/CTF3 family. As to quaternary structure, component of the CENPA-CAD complex, composed of CENPI, CENPK, CENPL, CENPO, CENPP, CENPQ, CENPR and CENPS. The CENPA-CAD complex interacts with the CENPA-NAC complex, at least composed of CENPA, CENPC, CENPH, CENPM, CENPN, CENPT and CENPU. Interacts with SENP6. In terms of processing, sumoylated. Sumoylated form can be polyubiquitinated by RNF4, leading to its degradation. Desumoylation by SENP6 prevents its degradation.

It is found in the nucleus. Its subcellular location is the chromosome. The protein localises to the centromere. Component of the CENPA-CAD (nucleosome distal) complex, a complex recruited to centromeres which is involved in assembly of kinetochore proteins, mitotic progression and chromosome segregation. May be involved in incorporation of newly synthesized CENPA into centromeres via its interaction with the CENPA-NAC complex. Required for the localization of CENPF, MAD1L1 and MAD2 (MAD2L1 or MAD2L2) to kinetochores. Involved in the response of gonadal tissues to follicle-stimulating hormone. The sequence is that of Centromere protein I (Cenpi) from Mus musculus (Mouse).